Consider the following 372-residue polypeptide: Putative glutamate--cysteine ligase 2 (372 aa).

The protein belongs to the glutamate--cysteine ligase type 2 family. YbdK subfamily. In terms of assembly, homodimer.

The enzyme catalyses L-cysteine + L-glutamate + ATP = gamma-L-glutamyl-L-cysteine + ADP + phosphate + H(+). ATP-dependent carboxylate-amine ligase which exhibits weak glutamate--cysteine ligase activity. This is Putative glutamate--cysteine ligase 2 from Citrobacter koseri (strain ATCC BAA-895 / CDC 4225-83 / SGSC4696).